The following is a 154-amino-acid chain: 3-hydroxyacyl-[acyl-carrier-protein] dehydratase FabZ (154 aa).

H57 is a catalytic residue.

Belongs to the thioester dehydratase family. FabZ subfamily.

The protein resides in the cytoplasm. It carries out the reaction a (3R)-hydroxyacyl-[ACP] = a (2E)-enoyl-[ACP] + H2O. In terms of biological role, involved in unsaturated fatty acids biosynthesis. Catalyzes the dehydration of short chain beta-hydroxyacyl-ACPs and long chain saturated and unsaturated beta-hydroxyacyl-ACPs. The chain is 3-hydroxyacyl-[acyl-carrier-protein] dehydratase FabZ from Sinorhizobium medicae (strain WSM419) (Ensifer medicae).